Consider the following 424-residue polypeptide: Myb family transcription factor RLI1 (424 aa).

The disordered stretch occupies residues 144–165; the sequence is RPQKRDSGERTPLPPPSQQQHQ. The HTH myb-type domain maps to 238–298; the sequence is APSKTRIRWT…HLQKYRIAKY (61 aa). Residues 269–294 constitute a DNA-binding region (H-T-H motif); the sequence is PKGILKLMNSDGLTIYHIKSHLQKYR. Residues 326 to 391 adopt a coiled-coil conformation; sequence MQITEALRVQ…ELDDVVAFAA (66 aa). An LHEQLE motif is present at residues 342-347; it reads LHEQLE.

It belongs to the MYB-CC family. In terms of assembly, interacts with SPX1 and SPX2 in the nucleus; these interactions prevent binding to the promoters of target genes, thus regulating negatively leaf inclination in response to phosphate (Pi) starvation. As to quaternary structure, homodimer. Interacts with PHR2 in the nucleus. In terms of tissue distribution, mostly expressed in roots and leaves blades and, to a lower extent, in leaves sheaths, culms and panicles. Localized in leaves lamina joints. Expressed equally in shoots and roots. As to expression, mostly expressed in shoots and, to a lower extent, in roots.

It localises to the nucleus. Transcription factor binding to specific DNA sequences of target genes promoters, such as the motif R1BS 5'-NAKATNCN-3' and the motif P1BS 5'-GNATATNC-3' to trigger their expression. Nitrate-induced component involved in modulating phosphate (Pi) response and homeostasis together with PHR2; activates directly the expression of Pi starvation-induced (PSI) genes upon nitrate disponibility, thus triggering the nitrate-induced phosphate response (NIPR) promoting Pi uptake activity. In terms of biological role, binds preferentially to the P1BS motif 5'-GNATATNC-3' in target genes promoters. Its function is as follows. Binds preferentially to the R1BS motif 5'-NAKATNCN-3' in target genes promoters, including several genes involved in the plant hormone signal transduction pathway. Involved in the shoot architecture; positively regulates leaf inclination by affecting lamina joint cell elongation via the direct promotion of ILI4/BU1 and BC1 genes expression, especially in response to phosphate (Pi) availability. Regulates both brassinolide (BL) biosynthesis and signaling by directly activating BL-biosynthesis and signaling genes. The protein is Myb family transcription factor RLI1 of Oryza sativa subsp. japonica (Rice).